The chain runs to 365 residues: Phosphopantothenate--cysteine ligase CAB2 (365 aa).

Residues 228–250 form a disordered region; it reads QSGDNGKMGANNDTEGTTRTTPD. Residues 238 to 248 are compositionally biased toward polar residues; that stretch reads NNDTEGTTRTT.

It belongs to the PPC synthetase family. As to quaternary structure, homodimer.

The protein localises to the cytoplasm. Its subcellular location is the nucleus. The catalysed reaction is (R)-4'-phosphopantothenate + L-cysteine + CTP = N-[(R)-4-phosphopantothenoyl]-L-cysteine + CMP + diphosphate + H(+). It participates in cofactor biosynthesis; coenzyme A biosynthesis; CoA from (R)-pantothenate: step 2/5. In terms of biological role, catalyzes the first step in the biosynthesis of coenzyme A from vitamin B5, where cysteine is conjugated to 4'-phosphopantothenate to form 4-phosphopantothenoylcysteine. In Saccharomyces cerevisiae (strain ATCC 204508 / S288c) (Baker's yeast), this protein is Phosphopantothenate--cysteine ligase CAB2 (CAB2).